Consider the following 559-residue polypeptide: Kelch repeat and BTB domain-containing protein 2 (559 aa).

In terms of domain architecture, BTB spans 26–95; sequence CDVIITIGDG…LYNRHISSMN (70 aa). Residues 128–223 form the BACK domain; that stretch reads CIYIYHRLYE…CIDIQNLDKK (96 aa). Kelch repeat units follow at residues 305–352, 353–399, and 401–463; these read EIII…VIDD, MIYA…VFDQ, and IYII…SHKD.

Interacts (via BTB domain) with host CUL3.

It is found in the host cytoplasm. Probable substrate-specific adapter of CUL3-containing E3 ubiquitin-protein ligases which mediate the ubiquitination and subsequent proteasomal degradation of host target proteins. The protein is Kelch repeat and BTB domain-containing protein 2 (KBTB2) of Mus musculus (Mouse).